The chain runs to 1036 residues: uncharacterized protein (1036 aa).

Helical transmembrane passes span 4–24 (YLFIPLLVSFLFPVALANASL) and 1004–1024 (ILWVIFGIIISLMISSAVLFL).

Belongs to the MG414/MG415 family.

The protein resides in the cell membrane. This is an uncharacterized protein from Mycoplasma genitalium (strain ATCC 33530 / DSM 19775 / NCTC 10195 / G37) (Mycoplasmoides genitalium).